A 69-amino-acid chain; its full sequence is UPF0337 protein YjbJ (69 aa).

It belongs to the UPF0337 (CsbD) family.

The polypeptide is UPF0337 protein YjbJ (yjbJ) (Escherichia coli O157:H7).